The chain runs to 468 residues: UDP-N-acetylmuramate--L-alanine ligase (468 aa).

Glycine 112–threonine 118 contributes to the ATP binding site.

It belongs to the MurCDEF family.

The protein resides in the cytoplasm. The enzyme catalyses UDP-N-acetyl-alpha-D-muramate + L-alanine + ATP = UDP-N-acetyl-alpha-D-muramoyl-L-alanine + ADP + phosphate + H(+). Its pathway is cell wall biogenesis; peptidoglycan biosynthesis. Cell wall formation. This Bordetella petrii (strain ATCC BAA-461 / DSM 12804 / CCUG 43448) protein is UDP-N-acetylmuramate--L-alanine ligase.